The sequence spans 437 residues: UDP-sugar transporter protein SLC35A5 (437 aa).

At 1–21 the chain is on the cytoplasmic side; that stretch reads MKVIFLRQLKTRGMERKCSRR. Residues 22–42 traverse the membrane as a helical segment; the sequence is PGLGPPTLYTFLLGIIFITLS. Topologically, residues 43-65 are lumenal; that stretch reads SSRILLVKYSANEENKYDYLPTT. Residues 66-86 traverse the membrane as a helical segment; that stretch reads VNVCSELMKLILCILVSLCVI. The Cytoplasmic portion of the chain corresponds to 87–106; the sequence is KKEDHQSRHLRCTSWKEFSS. The chain crosses the membrane as a helical span at residues 107–129; it reads FMKWSIPAFLYFLDNLIVFYVLS. The Lumenal segment spans residues 130–132; the sequence is YLQ. The chain crosses the membrane as a helical span at residues 133–155; it reads PAMAVIFSNFSIITTALLFRIVL. Over 156 to 158 the chain is Cytoplasmic; that stretch reads KRH. Residues 159–179 traverse the membrane as a helical segment; it reads LNWIQWASLLILFLSIVALTA. Over 180 to 241 the chain is Lumenal; it reads STKTSQHELA…TTARVFSHIR (62 aa). Asn-217 is a glycosylation site (N-linked (GlcNAc...) asparagine). A helical transmembrane segment spans residues 242 to 262; it reads LGLGHVLIIVQCFISSMANIY. Over 263–276 the chain is Cytoplasmic; the sequence is NEKILKEGTQLTES. A helical membrane pass occupies residues 277–297; the sequence is IFIQNSKLYFFGIVFNGLTLV. The Lumenal segment spans residues 298–316; sequence LQSSNRDQIQNCGFFYGHN. Residues 317–337 form a helical membrane-spanning segment; sequence AFSVVLIFVTAFQGLSVAFIL. At 338–343 the chain is on the cytoplasmic side; it reads KFLDNM. The chain crosses the membrane as a helical span at residues 344 to 364; it reads FHVLMAQVTTVIITTVSVLVF. Residues 365 to 367 lie on the Lumenal side of the membrane; that stretch reads DFR. The chain crosses the membrane as a helical span at residues 368 to 388; it reads PSLDFFLEAPSVLLSIFIYNA. The Cytoplasmic segment spans residues 389–437; that stretch reads SKPQNLECAPKQERIRHLSGSLWERSSGDGEELERLTKLKSDDSDDDTL. Phosphoserine is present on residues Ser-407, Ser-429, and Ser-432. A disordered region spans residues 412-437; it reads ERSSGDGEELERLTKLKSDDSDDDTL. Residues 421 to 430 are compositionally biased toward basic and acidic residues; sequence LERLTKLKSD.

This sequence belongs to the nucleotide-sugar transporter family. SLC35A subfamily. In terms of assembly, probably forms homooligomers and heterooligomers with SLC35A1, SLC35A2, SLC35A3 and SLC35A4.

It localises to the golgi apparatus membrane. It carries out the reaction UMP(out) + UDP-alpha-D-glucuronate(in) = UMP(in) + UDP-alpha-D-glucuronate(out). The enzyme catalyses UMP(out) + UDP-N-acetyl-alpha-D-glucosamine(in) = UMP(in) + UDP-N-acetyl-alpha-D-glucosamine(out). The catalysed reaction is UDP-N-acetyl-alpha-D-galactosamine(in) + UMP(out) = UDP-N-acetyl-alpha-D-galactosamine(out) + UMP(in). Its function is as follows. Probable UDP-sugar:UMP transmembrane antiporter involved in UDP-alpha-D-glucuronate/UDP-GlcA, UDP-GlcNAc/UDP-N-acetyl-alpha-D-glucosamine and UDP-N-acetyl-alpha-D-galactosamine/UDP-GalNAc transport from the cytosol to the lumen of the Golgi. This chain is UDP-sugar transporter protein SLC35A5, found in Mus musculus (Mouse).